Reading from the N-terminus, the 203-residue chain is Adenosylcobalamin/alpha-ribazole phosphatase (203 aa).

The active-site Tele-phosphohistidine intermediate is H8. The active-site Proton donor/acceptor is the E81.

The protein belongs to the phosphoglycerate mutase family.

The catalysed reaction is adenosylcob(III)alamin 5'-phosphate + H2O = adenosylcob(III)alamin + phosphate. It carries out the reaction alpha-ribazole 5'-phosphate + H2O = alpha-ribazole + phosphate. The protein operates within nucleoside biosynthesis; alpha-ribazole biosynthesis; alpha-ribazole from 5,6-dimethylbenzimidazole: step 2/2. In terms of biological role, catalyzes the conversion of adenosylcobalamin 5'-phosphate to adenosylcobalamin (vitamin B12); involved in the assembly of the nucleotide loop of cobalamin. Also catalyzes the hydrolysis of the phospho group from alpha-ribazole 5'-phosphate to form alpha-ribazole. The chain is Adenosylcobalamin/alpha-ribazole phosphatase (cobC) from Escherichia coli (strain K12).